The primary structure comprises 130 residues: Small ribosomal subunit protein uS9 (130 aa).

Belongs to the universal ribosomal protein uS9 family.

This Desulfovibrio desulfuricans (strain ATCC 27774 / DSM 6949 / MB) protein is Small ribosomal subunit protein uS9.